We begin with the raw amino-acid sequence, 786 residues long: Endonuclease MutS2 (786 aa).

335–342 serves as a coordination point for ATP; that stretch reads GPNTGGKT. One can recognise a Smr domain in the interval 711–786; it reads LDLRGERFEN…GLGVTVVELK (76 aa).

This sequence belongs to the DNA mismatch repair MutS family. MutS2 subfamily. As to quaternary structure, homodimer. Binds to stalled ribosomes, contacting rRNA.

Functionally, endonuclease that is involved in the suppression of homologous recombination and thus may have a key role in the control of bacterial genetic diversity. In terms of biological role, acts as a ribosome collision sensor, splitting the ribosome into its 2 subunits. Detects stalled/collided 70S ribosomes which it binds and splits by an ATP-hydrolysis driven conformational change. Acts upstream of the ribosome quality control system (RQC), a ribosome-associated complex that mediates the extraction of incompletely synthesized nascent chains from stalled ribosomes and their subsequent degradation. Probably generates substrates for RQC. The chain is Endonuclease MutS2 from Bacillus anthracis (strain A0248).